An 89-amino-acid chain; its full sequence is NADH-ubiquinone oxidoreductase chain 4L (89 aa).

Helical transmembrane passes span 1–21 (MNITLILFLIGILGFVLNRKN), 22–42 (IILMLISIEIMLLAITFLILV), and 57–77 (IYIIVVAGAESAIGLGILVAF).

This sequence belongs to the complex I subunit 4L family.

The protein resides in the mitochondrion membrane. The catalysed reaction is a ubiquinone + NADH + 5 H(+)(in) = a ubiquinol + NAD(+) + 4 H(+)(out). Core subunit of the mitochondrial membrane respiratory chain NADH dehydrogenase (Complex I) that is believed to belong to the minimal assembly required for catalysis. Complex I functions in the transfer of electrons from NADH to the respiratory chain. The immediate electron acceptor for the enzyme is believed to be ubiquinone. This chain is NADH-ubiquinone oxidoreductase chain 4L (ND4L), found in Podospora anserina (strain S / ATCC MYA-4624 / DSM 980 / FGSC 10383) (Pleurage anserina).